The chain runs to 228 residues: uncharacterized protein (228 aa).

5 consecutive transmembrane segments (helical) span residues 14-34 (HTISIFLGYLLMGMTFGMLLA), 42-62 (VALFMSLFIYAGAIQFVAITL), 130-150 (FMFSISLLNHSYWIFGSLVGS), 156-176 (FSFDTQGMEFVMTAIFIVLFM), and 192-212 (IAIAVVCLALFGTEYFLLIAL).

This sequence belongs to the AzlC family.

The protein resides in the cell membrane. This is an uncharacterized protein from Helicobacter pylori (strain J99 / ATCC 700824) (Campylobacter pylori J99).